The primary structure comprises 309 residues: MTKKLKILSVISTICMIPLLLGGALVTKTGSADGCGNSWPLCEGQFLPTKISFEMFIELSHRGVTGVVGILIVYLTYLVWKELRHNKEVVFLAFSALSLMILQALIGAAAVVWGQSDFALATHFGISLVCFAAVFLLMLQLFEIDKKLHTEDIHINKTHRIEIYAISFYTMCVVYSGALVRHTDSNLACRDWPLCVNNSSFGISDYNFYQWVQMGHRLAAGILFIWTVILTIRMVKHYKNSKVFYWSWLITLGLITLQVLFGALIIFTSLNLAIALFHALFITCYFGMLSFFMHLSFRAKRREKYSNQS.

The Cytoplasmic segment spans residues 1–6 (MTKKLK). The helical transmembrane segment at 7 to 27 (ILSVISTICMIPLLLGGALVT) threads the bilayer. Over 28–62 (KTGSADGCGNSWPLCEGQFLPTKISFEMFIELSHR) the chain is Extracellular. The cysteines at positions 35 and 42 are disulfide-linked. Glutamate 58 is an active-site residue. Heme o is bound at residue histidine 61. Residues 63–83 (GVTGVVGILIVYLTYLVWKEL) traverse the membrane as a helical segment. At 84–88 (RHNKE) the chain is on the cytoplasmic side. A helical membrane pass occupies residues 89 to 109 (VVFLAFSALSLMILQALIGAA). The Extracellular portion of the chain corresponds to 110-123 (AVVWGQSDFALATH). Histidine 123 serves as a coordination point for heme o. The chain crosses the membrane as a helical span at residues 124–144 (FGISLVCFAAVFLLMLQLFEI). Residues 145 to 159 (DKKLHTEDIHINKTH) lie on the Cytoplasmic side of the membrane. The helical transmembrane segment at 160–180 (RIEIYAISFYTMCVVYSGALV) threads the bilayer. Topologically, residues 181–211 (RHTDSNLACRDWPLCVNNSSFGISDYNFYQW) are extracellular. A disulfide bridge connects residues cysteine 189 and cysteine 195. Residues 212 to 232 (VQMGHRLAAGILFIWTVILTI) form a helical membrane-spanning segment. Heme b is bound at residue histidine 216. Over 233–247 (RMVKHYKNSKVFYWS) the chain is Cytoplasmic. Residues 248–268 (WLITLGLITLQVLFGALIIFT) traverse the membrane as a helical segment. At 269–271 (SLN) the chain is on the extracellular side. Residues 272–292 (LAIALFHALFITCYFGMLSFF) form a helical membrane-spanning segment. Position 278 (histidine 278) interacts with heme b. Topologically, residues 293–309 (MHLSFRAKRREKYSNQS) are cytoplasmic.

This sequence belongs to the COX15/CtaA family. Type 1 subfamily. Interacts with CtaB. Heme b is required as a cofactor.

The protein localises to the cell membrane. The catalysed reaction is Fe(II)-heme o + 2 A + H2O = Fe(II)-heme a + 2 AH2. It functions in the pathway porphyrin-containing compound metabolism; heme A biosynthesis; heme A from heme O: step 1/1. In terms of biological role, catalyzes the conversion of heme O to heme A by two successive hydroxylations of the methyl group at C8. The first hydroxylation forms heme I, the second hydroxylation results in an unstable dihydroxymethyl group, which spontaneously dehydrates, resulting in the formyl group of heme A. The polypeptide is Heme A synthase (Oceanobacillus iheyensis (strain DSM 14371 / CIP 107618 / JCM 11309 / KCTC 3954 / HTE831)).